A 143-amino-acid polypeptide reads, in one-letter code: MRVFTQLAVRLLDAILPEPDEPEHLKTGRRGEELAYFFLRKHGYTIVARNFRTPWHKSELDIIGWNGGILCFIEVKTRTTRDIATAEAAVDDTKRNDLRRVARHYLRQCAENTPTRFDIVTVYLDRPKPEITILKSAFLLSGE.

This sequence belongs to the UPF0102 family.

The sequence is that of UPF0102 protein Acid345_3985 from Koribacter versatilis (strain Ellin345).